Here is a 363-residue protein sequence, read N- to C-terminus: Dihydroorotate dehydrogenase (quinone) (363 aa).

FMN is bound by residues 62 to 66 and Thr86; that span reads AGYDK. Substrate is bound at residue Lys66. Residue 111-115 coordinates substrate; sequence NRLGF. 2 residues coordinate FMN: Asn139 and Asn170. A substrate-binding site is contributed by Asn170. The Nucleophile role is filled by Ser173. Asn175 is a substrate binding site. Residues Lys215 and Ser243 each contribute to the FMN site. 244–245 serves as a coordination point for substrate; it reads NT. Residues Gly266, Gly295, and 316 to 317 each bind FMN; that span reads YS.

Belongs to the dihydroorotate dehydrogenase family. Type 2 subfamily. Monomer. It depends on FMN as a cofactor.

The protein resides in the cell membrane. It catalyses the reaction (S)-dihydroorotate + a quinone = orotate + a quinol. It participates in pyrimidine metabolism; UMP biosynthesis via de novo pathway; orotate from (S)-dihydroorotate (quinone route): step 1/1. Catalyzes the conversion of dihydroorotate to orotate with quinone as electron acceptor. This chain is Dihydroorotate dehydrogenase (quinone), found in Agrobacterium fabrum (strain C58 / ATCC 33970) (Agrobacterium tumefaciens (strain C58)).